A 446-amino-acid chain; its full sequence is Eukaryotic translation initiation factor 2 subunit gamma (446 aa).

In terms of domain architecture, tr-type G spans 21–227 (QATINIGTIG…YIVKKIPIPV (207 aa)). A G1 region spans residues 30-37 (GHVAHGKS). 33–38 (AHGKST) contacts GTP. Residues 58-62 (NITIK) are G2. Residues 114-117 (DCPG) are G3. Residues 170–173 (NKVD) and 205–207 (SAQ) contribute to the GTP site. Residues 170–173 (NKVD) are G4. The G5 stretch occupies residues 205 to 207 (SAQ). The interval 436-446 (AKVVEGKTLKV) is interacts with cdc123.

This sequence belongs to the TRAFAC class translation factor GTPase superfamily. Classic translation factor GTPase family. EIF2G subfamily. In terms of assembly, eukaryotic translation initiation factor 2 eIF2 is a heterotrimeric complex composed of an alpha, a beta and a gamma subunit. The factors eIF-1, eIF-2, eIF-3, TIF5/eIF-5 and methionyl-tRNAi form a multifactor complex (MFC) that may bind to the 40S ribosome. Interacts with cdc123; the interaction is direct.

Its subcellular location is the cytoplasm. The protein resides in the cytosol. It carries out the reaction GTP + H2O = GDP + phosphate + H(+). Its function is as follows. As a subunit of eukaryotic initiation factor 2 eIF2, involved in the early steps of protein synthesis. In the presence of GTP, eIF-2 forms a ternary complex with initiator tRNA Met-tRNAi and then recruits the 40S ribosomal complex and initiation factors eIF-1, eIF-1A and eIF-3 to form the 43S pre-initiation complex (43S PIC), a step that determines the rate of protein translation. The 43S PIC binds to mRNA and scans downstream to the initiation codon, where it forms a 48S initiation complex by codon-anticodon base pairing. This leads to the displacement of eIF-1 to allow GTPase-activating protein (GAP) eIF-5-mediated hydrolysis of eIF2-bound GTP. Hydrolysis of GTP and release of Pi, which makes GTP hydrolysis irreversible, causes the release of the eIF-2-GDP binary complex from the 40S subunit, an event that is essential for the subsequent joining of the 60S ribosomal subunit to form an elongation-competent 80S ribosome. In order for eIF-2 to recycle and catalyze another round of initiation, the GDP bound to eIF-2 must be exchanged with GTP by way of a reaction catalyzed by GDP-GTP exchange factor (GEF) eIF-2B. The polypeptide is Eukaryotic translation initiation factor 2 subunit gamma (tif213) (Schizosaccharomyces pombe (strain 972 / ATCC 24843) (Fission yeast)).